We begin with the raw amino-acid sequence, 462 residues long: A-type ATP synthase subunit B (462 aa).

This sequence belongs to the ATPase alpha/beta chains family. In terms of assembly, has multiple subunits with at least A(3), B(3), C, D, E, F, H, I and proteolipid K(x).

The protein localises to the cell membrane. Its function is as follows. Component of the A-type ATP synthase that produces ATP from ADP in the presence of a proton gradient across the membrane. The B chain is a regulatory subunit. The chain is A-type ATP synthase subunit B from Methanococcus maripaludis (strain C5 / ATCC BAA-1333).